We begin with the raw amino-acid sequence, 1011 residues long: Antigenic heat-stable 120 kDa protein (1011 aa).

3 disordered regions span residues 1–37 (DTSE…TPAL), 54–73 (TPSM…TSDP), and 348–396 (GQSK…PQSQ). Basic and acidic residues predominate over residues 12-27 (EYTEEQKQTEEQEQKE). 2 stretches are compositionally biased toward polar residues: residues 348 to 373 (GQSK…QYKQ) and 380 to 396 (PTNQ…PQSQ).

It localises to the cytoplasm. The polypeptide is Antigenic heat-stable 120 kDa protein (sca4) (Rickettsia sibirica subsp. mongolitimonae (Rickettsia mongolotimonae)).